We begin with the raw amino-acid sequence, 1007 residues long: MGLFHHSTLFLPLLRRSNEGPHGEMPIGHYTRLSEIGRGSFAVVYKGVHTRSRTYVAIKSVTMTKLSRKLKENLASEISILKQLHHPHIVALLDCHDTTSNIHLVMEFCALGDLSHFIKGRNTLQDSPYTRELIAKYPNPGEGAGLNEVIVRHFLKQLSSALRFLRDRDLIHRDIKPQNLLLCPAPSSYRSGAADVVPFKSSEDSFSPKTGLESLPMLKLADFGFARSLPATSLAETLCGSPLYMAPEILRYEKYDAKADLWSVGTVLYEMVVGRAPFRAVNHIELIKKIEQNKDQISFPSKNRVSEDIRELIRGLLKQHPMDRMNFDVYFAHKVLTEPIPGLVADDAPLGRSPADPTPRPGSGSRRSTPVQMKRENALSGGVRDEPATYPAAQRAMTQSPRPETPSTPMRRTGSAGTPHAAPNEPTPPASHPTRPSPVSLATAPGRQEHVDRPPTTTVVEQQRRRTASSGVPQVDKPVEKAKDEKEHAAQEVAFERDYVLVEKRAVEMNAFADELAYNPRMQGGQAGAVSRRSGAAPGTPPAGGSSPHASPSKAMQIISGRSRADSAHVRQNSYDRRYGQSPTSATSAISKALNMASGRLFGMSFSPPLTITKGGRSPPLAYNPFPAYPSAQTSLIVHADGGKPGANLDEDSKTVHDLEECATRSDVVYGFAEVKYKQLIPLAPSAATGYPGDPGSDAVDSADGGLTVDAIVTLSEEALVLYVKALSLLAKSMDIARVWWTRKSRGDTLSRADTGSTVAGNRINNVVQWVRNRFNEVLEKAEFVRLKLVEAQKRLPSDHPSHPSNLSVGSSLGSGTSADVVVSPDVTAEKLMYERALEMSRVAAINEITGEDLAGCEISYVTAIRMLEAILDDVEVSRPGQSGGADRADARRDNEDGGQNEPQAVILAKSANAWHSDIENPESPGVAPEEAGAAVESVHAPVQWTGQNAAVESGASLPCSGSHAAEIRTLTVRSMQDHAHFAPLLFSIFISSYSSSISCPSSCGHC.

In terms of domain architecture, Protein kinase spans 30–336 (YTRLSEIGRG…FDVYFAHKVL (307 aa)). ATP is bound by residues 36–44 (IGRGSFAVV) and Lys59. Asp174 functions as the Proton acceptor in the catalytic mechanism. Disordered stretches follow at residues 343–489 (LVAD…KEHA), 524–586 (GGQA…PTSA), 795–817 (RLPS…GSGT), and 878–900 (SRPG…DGGQ). Positions 373–387 (MKRENALSGGVRDEP) are enriched in basic and acidic residues. Residues 396–410 (AMTQSPRPETPSTPM) are compositionally biased toward polar residues. A compositionally biased stretch (basic and acidic residues) spans 477–489 (KPVEKAKDEKEHA). Positions 534-555 (SGAAPGTPPAGGSSPHASPSKA) are enriched in low complexity. A compositionally biased stretch (basic and acidic residues) spans 563–579 (SRADSAHVRQNSYDRRY). Low complexity predominate over residues 805–817 (SNLSVGSSLGSGT). Basic and acidic residues predominate over residues 887–896 (DRADARRDNE).

It belongs to the protein kinase superfamily. Ser/Thr protein kinase family. APG1/unc-51/ULK1 subfamily. In terms of assembly, homodimer. Forms a ternary complex with ATG13 and ATG17.

The protein localises to the cytoplasm. It is found in the preautophagosomal structure membrane. The catalysed reaction is L-seryl-[protein] + ATP = O-phospho-L-seryl-[protein] + ADP + H(+). The enzyme catalyses L-threonyl-[protein] + ATP = O-phospho-L-threonyl-[protein] + ADP + H(+). In terms of biological role, serine/threonine protein kinase involved in the cytoplasm to vacuole transport (Cvt) and found to be essential in autophagy, where it is required for the formation of autophagosomes. Involved in the clearance of protein aggregates which cannot be efficiently cleared by the proteasome. Required for selective autophagic degradation of the nucleus (nucleophagy) as well as for mitophagy which contributes to regulate mitochondrial quantity and quality by eliminating the mitochondria to a basal level to fulfill cellular energy requirements and preventing excess ROS production. Also involved in endoplasmic reticulum-specific autophagic process, in selective removal of ER-associated degradation (ERAD) substrates. Plays a key role in ATG9 and ATG23 cycling through the pre-autophagosomal structure and is necessary to promote ATG18 binding to ATG9 through phosphorylation of ATG9. Catalyzes phosphorylation of ATG4, decreasing the interaction between ATG4 and ATG8 and impairing deconjugation of PE-conjugated forms of ATG8. The chain is Serine/threonine-protein kinase atg1 from Aspergillus niger (strain ATCC MYA-4892 / CBS 513.88 / FGSC A1513).